We begin with the raw amino-acid sequence, 527 residues long: EGF domain-specific O-linked N-acetylglucosamine transferase (527 aa).

Residues 1 to 17 form the signal peptide; it reads MLKLLVLGVLLHDVSLS. Residues 295 to 297 carry the Required for optimal activity motif; the sequence is DYD. N-linked (GlcNAc...) asparagine glycosylation occurs at Asn-354. Residues 524–527 carry the Prevents secretion from ER motif; that stretch reads RDEL.

This sequence belongs to the glycosyltransferase 61 family.

The protein resides in the endoplasmic reticulum lumen. The enzyme catalyses L-seryl-[protein] + UDP-N-acetyl-alpha-D-glucosamine = 3-O-(N-acetyl-beta-D-glucosaminyl)-L-seryl-[protein] + UDP + H(+). It catalyses the reaction L-threonyl-[protein] + UDP-N-acetyl-alpha-D-glucosamine = 3-O-(N-acetyl-beta-D-glucosaminyl)-L-threonyl-[protein] + UDP + H(+). Functionally, catalyzes the transfer of a single N-acetylglucosamine from UDP-GlcNAc to a serine or threonine residue in extracellular proteins resulting in their modification with a beta-linked N-acetylglucosamine (O-GlcNAc). Specifically glycosylates the Thr residue located between the fifth and sixth conserved cysteines of folded EGF-like domains. The chain is EGF domain-specific O-linked N-acetylglucosamine transferase (EOGT) from Canis lupus familiaris (Dog).